A 372-amino-acid polypeptide reads, in one-letter code: Cytochrome b (372 aa).

4 consecutive transmembrane segments (helical) span residues 25–45 (FGSMLLTCLALQTMTGFFLAI), 69–90 (WMMQNLHAIGASMFFICIYIHI), 105–125 (WLSGTTLLIILMATAFFGYVL), and 170–190 (FFALHFILPFTIISMSSIHIM). The heme b site is built by His75 and His89. Heme b is bound by residues His174 and His188. His193 serves as a coordination point for a ubiquinone. The next 4 membrane-spanning stretches (helical) occupy residues 218–238 (HKDMLMLTIMMTALFIIMSFN), 280–300 (LGGAVALVLSVTILMTMPFTH), 312–332 (LMQFMFWTLVTTFIMITWAAT), and 339–358 (FTTIGQVTSILYFTFFIMNP).

Belongs to the cytochrome b family. As to quaternary structure, the cytochrome bc1 complex contains 3 respiratory subunits (MT-CYB, CYC1 and UQCRFS1), 2 core proteins (UQCRC1 and UQCRC2) and probably 6 low-molecular weight proteins. It depends on heme b as a cofactor.

The protein resides in the mitochondrion inner membrane. Component of the ubiquinol-cytochrome c reductase complex (complex III or cytochrome b-c1 complex) that is part of the mitochondrial respiratory chain. The b-c1 complex mediates electron transfer from ubiquinol to cytochrome c. Contributes to the generation of a proton gradient across the mitochondrial membrane that is then used for ATP synthesis. This Pantherophis bairdi (Baird's ratsnake) protein is Cytochrome b (MT-CYB).